The primary structure comprises 481 residues: Surface lipoprotein assembly modifier 1 (481 aa).

The signal sequence occupies residues 1–23; that stretch reads MSIQTKFILFLSSSLFLTPYSVA. Residues 25-192 form an N-terminal domain region; that stretch reads EKSPQPHDGR…QYLSALNQRD (168 aa). The interval 193–481 is C-terminal probable beta barrel; sequence QWKIQGGFSF…RIYVEISKTF (289 aa). 14 beta stranded membrane passes run 194-204, 233-243, 248-258, 271-281, 285-295, 315-325, 329-338, 353-363, 368-377, 390-400, 405-414, 432-441, 448-458, and 471-481; these read WKIQGGFSFLN, SYFGNAEKKWS, HFTKLSLEGSG, NARAGVGLGYQ, FELSLMPFTEK, SGARLDLSNWL, WQISTALEYG, YLASATLLYLA, YWFGGADYNR, KNVRLGWGQEW, STRLILNYAR, YASVLTIWHR, ITPKLSWSYQK, and NRIYVEISKTF.

It belongs to the Slam family.

It localises to the cell outer membrane. In terms of biological role, required for correct export to the cell surface of some cell outer membrane lipoproteins. This Haemophilus influenzae (strain ATCC 51907 / DSM 11121 / KW20 / Rd) protein is Surface lipoprotein assembly modifier 1.